A 491-amino-acid chain; its full sequence is Ketol-acid reductoisomerase (NADP(+)) (491 aa).

Positions 15 to 208 constitute a KARI N-terminal Rossmann domain; the sequence is AQLGKCRFMG…GGHRAGVLES (194 aa). NADP(+) is bound by residues 45–48, Arg68, Arg76, Ser78, and 108–110; these read CGAQ and DKQ. The active site involves His132. Gly158 is an NADP(+) binding site. 2 KARI C-terminal knotted domains span residues 209–344 and 345–484; these read SFVA…TAPQ and YEGK…MTDM. 4 residues coordinate Mg(2+): Asp217, Glu221, Glu389, and Glu393. Ser414 contributes to the substrate binding site.

Belongs to the ketol-acid reductoisomerase family. Requires Mg(2+) as cofactor.

The catalysed reaction is (2R)-2,3-dihydroxy-3-methylbutanoate + NADP(+) = (2S)-2-acetolactate + NADPH + H(+). The enzyme catalyses (2R,3R)-2,3-dihydroxy-3-methylpentanoate + NADP(+) = (S)-2-ethyl-2-hydroxy-3-oxobutanoate + NADPH + H(+). The protein operates within amino-acid biosynthesis; L-isoleucine biosynthesis; L-isoleucine from 2-oxobutanoate: step 2/4. It functions in the pathway amino-acid biosynthesis; L-valine biosynthesis; L-valine from pyruvate: step 2/4. Involved in the biosynthesis of branched-chain amino acids (BCAA). Catalyzes an alkyl-migration followed by a ketol-acid reduction of (S)-2-acetolactate (S2AL) to yield (R)-2,3-dihydroxy-isovalerate. In the isomerase reaction, S2AL is rearranged via a Mg-dependent methyl migration to produce 3-hydroxy-3-methyl-2-ketobutyrate (HMKB). In the reductase reaction, this 2-ketoacid undergoes a metal-dependent reduction by NADPH to yield (R)-2,3-dihydroxy-isovalerate. This is Ketol-acid reductoisomerase (NADP(+)) from Escherichia coli O8 (strain IAI1).